The following is a 373-amino-acid chain: Glutamate 5-kinase (373 aa).

ATP is bound at residue Lys12. 3 residues coordinate substrate: Ser52, Asp139, and Asn154. An ATP-binding site is contributed by 216-222 (TGGMVTK). In terms of domain architecture, PUA spans 281–359 (RGSICVDDGA…QELNAVLGGN (79 aa)).

This sequence belongs to the glutamate 5-kinase family.

The protein localises to the cytoplasm. It carries out the reaction L-glutamate + ATP = L-glutamyl 5-phosphate + ADP. The protein operates within amino-acid biosynthesis; L-proline biosynthesis; L-glutamate 5-semialdehyde from L-glutamate: step 1/2. Catalyzes the transfer of a phosphate group to glutamate to form L-glutamate 5-phosphate. The sequence is that of Glutamate 5-kinase from Dehalococcoides mccartyi (strain CBDB1).